We begin with the raw amino-acid sequence, 394 residues long: NAC domain-containing protein 26 (394 aa).

The region spanning 7 to 156 is the NAC domain; that stretch reads VPPGFRFHPT…GWVVCRVFKK (150 aa). A DNA-binding region spans residues 107–162; that stretch reads IGMRKTLVFYKGRAPNGQKSDWIMHEYRLETSENGTPQEEGWVVCRVFKKKLAATV.

This sequence belongs to the plant vascular related NAC-domain protein family. Interacts with NAC083/VNI2. In terms of tissue distribution, detected in root vessels of protoxylems, outermost metaxylems, inner metaxylems, shoots and hypocotyls. Expressed in roots, hypocotyls, cotyledons and leaves. Expressed in developing xylems. Specifically expressed in vessels in the secondary xylem of the root-hypocotyl region, and in vessels but not in interfascicular fibers in stems.

Its subcellular location is the nucleus. Transcription activator that binds to the secondary wall NAC binding element (SNBE), 5'-(T/A)NN(C/T)(T/C/G)TNNNNNNNA(A/C)GN(A/C/T)(A/T)-3', in the promoter of target genes. Involved in xylem formation by promoting the expression of secondary wall-associated transcription factors and of genes involved in secondary wall biosynthesis and programmed cell death, genes driven by the secondary wall NAC binding element (SNBE). Triggers thickening of secondary walls. The polypeptide is NAC domain-containing protein 26 (Arabidopsis thaliana (Mouse-ear cress)).